The sequence spans 112 residues: Cytochrome c (112 aa).

4 residues coordinate heme c: Cys23, Cys26, His27, and Met89.

This sequence belongs to the cytochrome c family. Post-translationally, binds 1 heme c group covalently per subunit.

It localises to the mitochondrion intermembrane space. Its function is as follows. Electron carrier protein. The oxidized form of the cytochrome c heme group can accept an electron from the heme group of the cytochrome c1 subunit of cytochrome reductase. Cytochrome c then transfers this electron to the cytochrome oxidase complex, the final protein carrier in the mitochondrial electron-transport chain. This chain is Cytochrome c (CYC1), found in Chlamydomonas reinhardtii (Chlamydomonas smithii).